A 204-amino-acid chain; its full sequence is Urease accessory protein UreG (204 aa).

11 to 18 (GPVGAGKT) lines the GTP pocket.

The protein belongs to the SIMIBI class G3E GTPase family. UreG subfamily. In terms of assembly, homodimer. UreD, UreF and UreG form a complex that acts as a GTP-hydrolysis-dependent molecular chaperone, activating the urease apoprotein by helping to assemble the nickel containing metallocenter of UreC. The UreE protein probably delivers the nickel.

The protein localises to the cytoplasm. Facilitates the functional incorporation of the urease nickel metallocenter. This process requires GTP hydrolysis, probably effectuated by UreG. This is Urease accessory protein UreG from Staphylococcus aureus (strain Mu3 / ATCC 700698).